Here is a 511-residue protein sequence, read N- to C-terminus: 2-methylbutanal oxime monooxygenase (511 aa).

The next 2 membrane-spanning stretches (helical) occupy residues 10–30 (PPQW…LLLF) and 304–324 (ILMN…TWAF). Residue cysteine 451 participates in heme binding.

It belongs to the cytochrome P450 family. Heme is required as a cofactor. Expressed in storage roots, primary roots, petioles and vascular tissues. Expressed in the outer cortex cells, the endodermis and around the xylem, phloem cells and laticifers.

It localises to the microsome membrane. The enzyme catalyses (1E,2S)-2-methylbutanal oxime + reduced [NADPH--hemoprotein reductase] + O2 = 2-hydroxy-2-methylbutanenitrile + oxidized [NADPH--hemoprotein reductase] + 2 H2O + H(+). The catalysed reaction is (E)-2-methylpropanal oxime + reduced [NADPH--hemoprotein reductase] + O2 = 2-hydroxy-2-methylpropanenitrile + oxidized [NADPH--hemoprotein reductase] + 2 H2O + H(+). Its function is as follows. Catalyzes the conversion of (E)-2-methylpropanal oxime (valox) to 2-hydroxy-2-methylpropanenitrile (acetone cyanohydrin) and of (E)-2-methylbutanal oxime (ilox) to 2-hydroxy-2-methylbutyronitrile. The reaction takes place in three steps. First, the oxime is isomerized to the (Z)- isomer, next the (Z)-isomer is dehydrated to the corresponding nitrile, followed by a C-hydroxylation of the nitrile. Can use both aliphatic and aromatic oximes as substrates. The sequence is that of 2-methylbutanal oxime monooxygenase (CYP71E7) from Manihot esculenta (Cassava).